A 259-amino-acid polypeptide reads, in one-letter code: 3-deoxy-manno-octulosonate cytidylyltransferase (259 aa).

The protein belongs to the KdsB family.

It localises to the cytoplasm. It catalyses the reaction 3-deoxy-alpha-D-manno-oct-2-ulosonate + CTP = CMP-3-deoxy-beta-D-manno-octulosonate + diphosphate. The protein operates within nucleotide-sugar biosynthesis; CMP-3-deoxy-D-manno-octulosonate biosynthesis; CMP-3-deoxy-D-manno-octulosonate from 3-deoxy-D-manno-octulosonate and CTP: step 1/1. It participates in bacterial outer membrane biogenesis; lipopolysaccharide biosynthesis. In terms of biological role, activates KDO (a required 8-carbon sugar) for incorporation into bacterial lipopolysaccharide in Gram-negative bacteria. The protein is 3-deoxy-manno-octulosonate cytidylyltransferase of Aeromonas salmonicida (strain A449).